A 176-amino-acid polypeptide reads, in one-letter code: Conidiation-specific protein 8 (176 aa).

2 disordered regions span residues 1-66 (MDDT…SKLI) and 79-162 (AASE…PQGF). The span at 79–99 (AASEAFRSERSASTSSTTSET) shows a compositional bias: low complexity.

The sequence is that of Conidiation-specific protein 8 (con-8) from Neurospora crassa (strain ATCC 24698 / 74-OR23-1A / CBS 708.71 / DSM 1257 / FGSC 987).